A 433-amino-acid chain; its full sequence is Serine hydroxymethyltransferase (433 aa).

(6S)-5,6,7,8-tetrahydrofolate is bound by residues L132 and 136–138 (GHL). K241 is modified (N6-(pyridoxal phosphate)lysine).

It belongs to the SHMT family. Homodimer. It depends on pyridoxal 5'-phosphate as a cofactor.

It localises to the cytoplasm. The enzyme catalyses (6R)-5,10-methylene-5,6,7,8-tetrahydrofolate + glycine + H2O = (6S)-5,6,7,8-tetrahydrofolate + L-serine. It participates in one-carbon metabolism; tetrahydrofolate interconversion. The protein operates within amino-acid biosynthesis; glycine biosynthesis; glycine from L-serine: step 1/1. In terms of biological role, catalyzes the reversible interconversion of serine and glycine with tetrahydrofolate (THF) serving as the one-carbon carrier. This reaction serves as the major source of one-carbon groups required for the biosynthesis of purines, thymidylate, methionine, and other important biomolecules. Also exhibits THF-independent aldolase activity toward beta-hydroxyamino acids, producing glycine and aldehydes, via a retro-aldol mechanism. The polypeptide is Serine hydroxymethyltransferase (Rhodopseudomonas palustris (strain HaA2)).